Consider the following 450-residue polypeptide: Runt-related transcription factor 1 (450 aa).

The tract at residues 1 to 25 (MRIPVDASTSRRFTPPSTALSPGKM) is disordered. Residues 7–20 (ASTSRRFTPPSTAL) are compositionally biased toward polar residues. The residue at position 14 (T14) is a Phosphothreonine. Phosphoserine is present on S21. An N6-acetyllysine mark is found at K24 and K43. The 129-residue stretch at 50–178 (SMVEVLADHP…TVDGPREPRR (129 aa)) folds into the Runt domain. The interval 80–84 (RCNKT) is interaction with DNA. 4 residues coordinate chloride: N112, E116, R139, and V170. Interaction with DNA regions lie at residues 135 to 143 (RFVGRSGRG) and 168 to 177 (ITVDGPREPR). 2 disordered regions span residues 170-195 (VDGP…LSFS) and 209-252 (MRVS…SPPW). 2 positions are modified to phosphoserine: S193 and S212. Positions 222–247 (PRASLNHSTAFNPQPQSQMQDARQIQ) are enriched in polar residues. S249 carries the post-translational modification Phosphoserine; by HIPK2. 2 positions are modified to phosphoserine: S266 and S267. T272 bears the Phosphothreonine; by HIPK2 mark. A Phosphoserine; by HIPK2 modification is found at S275. The tract at residues 290–369 (SSRLSTAPDL…SQAQAGPFQT (80 aa)) is interaction with KAT6A. T295 bears the Phosphothreonine mark. Residues 306 to 398 (RQFPTLPSIS…MVGGERSPPR (93 aa)) form an interaction with KAT6B region. An interaction with FOXP3 region spans residues 360-400 (SQAQAGPFQTGSPSYHLYYGTSAGSYQFSMVGGERSPPRIL). The segment at 410-450 (AALLNPSLPSQSDVVETEGSHSNSPTNMPPARLEEAVWRPY) is disordered. The segment covering 416-435 (SLPSQSDVVETEGSHSNSPT) has biased composition (polar residues). Phosphoserine is present on S433. A compositionally biased stretch (basic and acidic residues) spans 441-450 (RLEEAVWRPY).

In terms of assembly, heterodimer with CBFB. RUNX1 binds DNA as a monomer and through the Runt domain. DNA-binding is increased by heterodimerization. Interacts with TLE1 and ALYREF/THOC4. Interacts with ELF1, ELF2 and SPI1. Interacts via its Runt domain with the ELF4 N-terminal region. Interaction with ELF2 isoform 2 (NERF-1a) may act to repress RUNX1-mediated transactivation. Interacts with KAT6A and KAT6B. Interacts with SUV39H1, leading to abrogation of transactivating and DNA-binding properties of RUNX1. Interacts with YAP1 and HIPK2. Interaction with CDK6 prevents myeloid differentiation, reducing its transcription transactivation activity. Found in a complex with PRMT5, RUNX1 and CBFB. Interacts with FOXP3. Interacts with TBX21. Interacts with DPF2. Phosphorylated in its C-terminus upon IL-6 treatment. Phosphorylation enhances interaction with KAT6A. Post-translationally, methylated. In terms of processing, phosphorylated in Ser-249 Thr-272 and Ser-275 by HIPK2 when associated with CBFB and DNA. This phosphorylation promotes subsequent EP300 phosphorylation. As to expression, expressed in skeletal muscle.

It localises to the nucleus. Functionally, CBF binds to the core site, 5'-PYGPYGGT-3', of a number of enhancers and promoters, including murine leukemia virus, polyomavirus enhancer, T-cell receptor enhancers, LCK, IL-3 and GM-CSF promoters. The alpha subunit binds DNA and appears to have a role in the development of normal hematopoiesis. Isoform AML-1L interferes with the transactivation activity of RUNX1. Acts synergistically with ELF4 to transactivate the IL-3 promoter and with ELF2 to transactivate the BLK promoter. Inhibits KAT6B-dependent transcriptional activation. Controls the anergy and suppressive function of regulatory T-cells (Treg) by associating with FOXP3. Activates the expression of IL2 and IFNG and down-regulates the expression of TNFRSF18, IL2RA and CTLA4, in conventional T-cells. Positively regulates the expression of RORC in T-helper 17 cells. The sequence is that of Runt-related transcription factor 1 (Runx1) from Rattus norvegicus (Rat).